The sequence spans 205 residues: NAD(P)H dehydrogenase (quinone) (205 aa).

The 192-residue stretch at 3 to 194 folds into the Flavodoxin-like domain; the sequence is VLVVYYSMYG…AAARYQGKHV (192 aa). FMN is bound by residues 9–14 and 82–84; these read SMYGHI and TRF. Tyr-11 provides a ligand contact to NAD(+). Trp-102 contacts substrate. His-138 contributes to the FMN binding site.

Belongs to the WrbA family. The cofactor is FMN.

It carries out the reaction a quinone + NADH + H(+) = a quinol + NAD(+). The catalysed reaction is a quinone + NADPH + H(+) = a quinol + NADP(+). The chain is NAD(P)H dehydrogenase (quinone) from Geotalea daltonii (strain DSM 22248 / JCM 15807 / FRC-32) (Geobacter daltonii).